The following is a 459-amino-acid chain: Nuclear hormone receptor family member nhr-11 (459 aa).

Residues 2–81 constitute a DNA-binding region (nuclear receptor); that stretch reads GPLCAVCESP…AGMRSELVRS (80 aa). 2 NR C4-type zinc fingers span residues 5-26 and 42-69; these read CAVC…CKAC and CAAD…LRKC. 2 disordered regions span residues 90–119 and 134–162; these read RRKD…EEMD and DLPL…SSFD. The span at 97–115 shows a compositional bias: low complexity; the sequence is NSDAAPNSNSPSTRQSSSP. The 271-residue stretch at 188–458 folds into the NR LBD domain; the sequence is ENNSILQYYH…SMLHEMLNFQ (271 aa).

It belongs to the nuclear hormone receptor family.

It localises to the nucleus. Its function is as follows. Orphan nuclear receptor. This chain is Nuclear hormone receptor family member nhr-11 (nhr-11), found in Caenorhabditis elegans.